We begin with the raw amino-acid sequence, 936 residues long: Protein translocase subunit SecA (936 aa).

Residues Q87, 105 to 109, and D515 contribute to the ATP site; that span reads GEGKT. Zn(2+) is bound by residues C920, C922, C931, and H932.

The protein belongs to the SecA family. As to quaternary structure, monomer and homodimer. Part of the essential Sec protein translocation apparatus which comprises SecA, SecYEG and auxiliary proteins SecDF-YajC and YidC. Zn(2+) serves as cofactor.

Its subcellular location is the cell inner membrane. The protein resides in the cytoplasm. It catalyses the reaction ATP + H2O + cellular proteinSide 1 = ADP + phosphate + cellular proteinSide 2.. Functionally, part of the Sec protein translocase complex. Interacts with the SecYEG preprotein conducting channel. Has a central role in coupling the hydrolysis of ATP to the transfer of proteins into and across the cell membrane, serving both as a receptor for the preprotein-SecB complex and as an ATP-driven molecular motor driving the stepwise translocation of polypeptide chains across the membrane. This chain is Protein translocase subunit SecA, found in Paraburkholderia phymatum (strain DSM 17167 / CIP 108236 / LMG 21445 / STM815) (Burkholderia phymatum).